Here is a 737-residue protein sequence, read N- to C-terminus: Lysyl oxidase homolog 2A (737 aa).

A signal peptide spans 1 to 18 (MAVSSALCIFSLLVLAQA). 4 SRCR domains span residues 29–130 (LRLA…VICN), 159–270 (IRPI…VSCV), 294–393 (VRLR…VRCN), and 403–512 (IRLS…VSCS). Intrachain disulfides connect C55/C119, C68/C129, C99/C109, C188/C259, C201/C269, C235/C245, C319/C382, C332/C392, and C363/C373. N256 is a glycosylation site (N-linked (GlcNAc...) asparagine). Residue N423 is glycosylated (N-linked (GlcNAc...) asparagine). Cystine bridges form between C432–C498, C445–C511, and C479–C489. The segment at 516-718 (PDLVLNAQLV…WTYSCHIGGS (203 aa)) is lysyl-oxidase like. Ca(2+)-binding residues include D517 and L518. Cystine bridges form between C541/C592, C547/C662, C624/C640, and C630/C652. The Cu cation site is built by H593, H595, and H597. Residue N611 is glycosylated (N-linked (GlcNAc...) asparagine). Positions 620–656 (KASFCLEDTHCDEGISKRYHCANFGEQGITVGCWDTY) form a cross-link, lysine tyrosylquinone (Lys-Tyr). Residue Y656 is modified to 2',4',5'-topaquinone. 4 residues coordinate Ca(2+): E689, D691, N694, and N695. A disulfide bond links C699 and C713.

The protein belongs to the lysyl oxidase family. The cofactor is Cu cation. Lysine tyrosylquinone residue is required as a cofactor. In terms of processing, the lysine tyrosylquinone cross-link (LTQ) is generated by condensation of the epsilon-amino group of a lysine with a topaquinone produced by oxidation of tyrosine.

Its subcellular location is the secreted. The protein resides in the extracellular space. The protein localises to the extracellular matrix. It is found in the basement membrane. It localises to the nucleus. Its subcellular location is the chromosome. The protein resides in the endoplasmic reticulum. It carries out the reaction L-lysyl-[protein] + O2 + H2O = (S)-2-amino-6-oxohexanoyl-[protein] + H2O2 + NH4(+). In terms of biological role, mediates the post-translational oxidative deamination of lysine residues on target proteins leading to the formation of deaminated lysine (allysine). Acts as a transcription corepressor and specifically mediates deamination of trimethylated 'Lys-4' of histone H3 (H3K4me3), a specific tag for epigenetic transcriptional activation. Shows no activity against histone H3 when it is trimethylated on 'Lys-9' (H3K9me3) or 'Lys-27' (H3K27me3) or when 'Lys-4' is monomethylated (H3K4me1) or dimethylated (H3K4me2). Also mediates deamination of methylated TAF10, a member of the transcription factor IID (TFIID) complex, which induces release of TAF10 from promoters, leading to inhibition of TFIID-dependent transcription. LOXL2-mediated deamination of TAF10 results in transcriptional repression of genes required for embryonic stem cell pluripotency. Involved in epithelial to mesenchymal transition (EMT) and participates in repression of E-cadherin, probably by mediating deamination of histone H3. When secreted into the extracellular matrix, promotes cross-linking of extracellular matrix proteins by mediating oxidative deamination of peptidyl lysine residues in precursors to fibrous collagen and elastin. Acts as a regulator of sprouting angiogenesis, probably via collagen IV scaffolding. Acts as a regulator of chondrocyte differentiation, probably by regulating expression of factors that control chondrocyte differentiation. Required with loxl2b for correct expression of Sox2 and for neural differentiation. This Danio rerio (Zebrafish) protein is Lysyl oxidase homolog 2A (loxl2a).